The chain runs to 51 residues: Large ribosomal subunit protein bL33 (51 aa).

Belongs to the bacterial ribosomal protein bL33 family.

This Psychrobacter arcticus (strain DSM 17307 / VKM B-2377 / 273-4) protein is Large ribosomal subunit protein bL33.